The sequence spans 1342 residues: DNA-directed RNA polymerase subunit beta (1342 aa).

Residues lysine 1022 and lysine 1200 each carry the N6-acetyllysine modification.

It belongs to the RNA polymerase beta chain family. As to quaternary structure, the RNAP catalytic core consists of 2 alpha, 1 beta, 1 beta' and 1 omega subunit. When a sigma factor is associated with the core the holoenzyme is formed, which can initiate transcription.

It carries out the reaction RNA(n) + a ribonucleoside 5'-triphosphate = RNA(n+1) + diphosphate. DNA-dependent RNA polymerase catalyzes the transcription of DNA into RNA using the four ribonucleoside triphosphates as substrates. This is DNA-directed RNA polymerase subunit beta from Escherichia coli O81 (strain ED1a).